A 77-amino-acid polypeptide reads, in one-letter code: Translation initiation factor IF-1, chloroplastic (77 aa).

In terms of domain architecture, S1-like spans 1–71 (MKEQKWVHEG…TRGRIIYRLR (71 aa)).

This sequence belongs to the IF-1 family. As to quaternary structure, component of the 30S ribosomal translation pre-initiation complex which assembles on the 30S ribosome in the order IF-2 and IF-3, IF-1 and N-formylmethionyl-tRNA(fMet); mRNA recruitment can occur at any time during PIC assembly.

Its subcellular location is the plastid. It localises to the chloroplast. Its function is as follows. One of the essential components for the initiation of protein synthesis. Stabilizes the binding of IF-2 and IF-3 on the 30S subunit to which N-formylmethionyl-tRNA(fMet) subsequently binds. Helps modulate mRNA selection, yielding the 30S pre-initiation complex (PIC). Upon addition of the 50S ribosomal subunit IF-1, IF-2 and IF-3 are released leaving the mature 70S translation initiation complex. The polypeptide is Translation initiation factor IF-1, chloroplastic (Cercidiphyllum japonicum (Katsura tree)).